Here is a 357-residue protein sequence, read N- to C-terminus: Protein RecA (357 aa).

79–86 (GPESSGKT) serves as a coordination point for ATP.

It belongs to the RecA family.

It is found in the cytoplasm. In terms of biological role, can catalyze the hydrolysis of ATP in the presence of single-stranded DNA, the ATP-dependent uptake of single-stranded DNA by duplex DNA, and the ATP-dependent hybridization of homologous single-stranded DNAs. It interacts with LexA causing its activation and leading to its autocatalytic cleavage. The chain is Protein RecA from Chloroherpeton thalassium (strain ATCC 35110 / GB-78).